A 162-amino-acid polypeptide reads, in one-letter code: NADH-quinone oxidoreductase subunit I (162 aa).

4Fe-4S ferredoxin-type domains are found at residues 52-82 (LRRY…IEAG) and 93-122 (VRYD…EGPN). The [4Fe-4S] cluster site is built by cysteine 62, cysteine 65, cysteine 68, cysteine 72, cysteine 102, cysteine 105, cysteine 108, and cysteine 112.

The protein belongs to the complex I 23 kDa subunit family. In terms of assembly, NDH-1 is composed of 14 different subunits. Subunits NuoA, H, J, K, L, M, N constitute the membrane sector of the complex. The cofactor is [4Fe-4S] cluster.

The protein resides in the cell inner membrane. The catalysed reaction is a quinone + NADH + 5 H(+)(in) = a quinol + NAD(+) + 4 H(+)(out). Functionally, NDH-1 shuttles electrons from NADH, via FMN and iron-sulfur (Fe-S) centers, to quinones in the respiratory chain. The immediate electron acceptor for the enzyme in this species is believed to be ubiquinone. Couples the redox reaction to proton translocation (for every two electrons transferred, four hydrogen ions are translocated across the cytoplasmic membrane), and thus conserves the redox energy in a proton gradient. In Afipia carboxidovorans (strain ATCC 49405 / DSM 1227 / KCTC 32145 / OM5) (Oligotropha carboxidovorans), this protein is NADH-quinone oxidoreductase subunit I.